Here is a 432-residue protein sequence, read N- to C-terminus: Trigger factor (432 aa).

Positions 161-246 constitute a PPIase FKBP-type domain; sequence GTRATINFVG…VVKVEARELP (86 aa).

This sequence belongs to the FKBP-type PPIase family. Tig subfamily.

It localises to the cytoplasm. It catalyses the reaction [protein]-peptidylproline (omega=180) = [protein]-peptidylproline (omega=0). Its function is as follows. Involved in protein export. Acts as a chaperone by maintaining the newly synthesized protein in an open conformation. Functions as a peptidyl-prolyl cis-trans isomerase. This Aliivibrio salmonicida (strain LFI1238) (Vibrio salmonicida (strain LFI1238)) protein is Trigger factor.